A 149-amino-acid polypeptide reads, in one-letter code: Ribonuclease pancreatic (149 aa).

Positions 1-25 are cleaved as a signal peptide; that stretch reads MGLEKSLILFPLFFLLLGWVQPSLG. Positions 32 and 35 each coordinate substrate. His37 serves as the catalytic Proton acceptor. Disulfide bonds link Cys51-Cys109, Cys65-Cys120, Cys83-Cys135, and Cys90-Cys97. Substrate-binding positions include 66–70 and Lys91; that span reads KPVNT. His144 acts as the Proton donor in catalysis.

It belongs to the pancreatic ribonuclease family. In terms of assembly, monomer. Interacts with and forms tight 1:1 complexes with RNH1. Dimerization of two such complexes may occur. Interaction with RNH1 inhibits this protein. As to expression, pancreas.

It localises to the secreted. It catalyses the reaction an [RNA] containing cytidine + H2O = an [RNA]-3'-cytidine-3'-phosphate + a 5'-hydroxy-ribonucleotide-3'-[RNA].. The enzyme catalyses an [RNA] containing uridine + H2O = an [RNA]-3'-uridine-3'-phosphate + a 5'-hydroxy-ribonucleotide-3'-[RNA].. Functionally, endonuclease that catalyzes the cleavage of RNA on the 3' side of pyrimidine nucleotides. Acts on single-stranded and double-stranded RNA. The polypeptide is Ribonuclease pancreatic (Rnase1) (Mus musculus (Mouse)).